A 388-amino-acid chain; its full sequence is Pectin acetylesterase 1 (388 aa).

Residues 1–24 form the signal peptide; the sequence is MKTLLYWGWSSLAGLILFSILAHG. N-linked (GlcNAc...) asparagine glycans are attached at residues N30 and N33. Active-site charge relay system residues include S187 and D283. N-linked (GlcNAc...) asparagine glycosylation occurs at N304. The active-site Charge relay system is H349.

Belongs to the pectinacetylesterase family.

The protein localises to the secreted. The protein resides in the cell wall. Hydrolyzes acetyl esters in homogalacturonan regions of pectin. In type I primary cell wall, galacturonic acid residues of pectin can be acetylated at the O-2 and O-3 positions. Decreasing the degree of acetylation of pectin gels in vitro alters their physical properties. The protein is Pectin acetylesterase 1 of Arabidopsis thaliana (Mouse-ear cress).